The sequence spans 199 residues: Dephospho-CoA kinase (199 aa).

One can recognise a DPCK domain in the interval 2-199 (KIAVTGGYSS…FVADRIEKKK (198 aa)). 10-15 (SSGKSS) serves as a coordination point for ATP.

The protein belongs to the CoaE family.

The protein resides in the cytoplasm. It catalyses the reaction 3'-dephospho-CoA + ATP = ADP + CoA + H(+). The protein operates within cofactor biosynthesis; coenzyme A biosynthesis; CoA from (R)-pantothenate: step 5/5. Functionally, catalyzes the phosphorylation of the 3'-hydroxyl group of dephosphocoenzyme A to form coenzyme A. The protein is Dephospho-CoA kinase of Desulfotalea psychrophila (strain LSv54 / DSM 12343).